The chain runs to 249 residues: Methyl-coenzyme M reductase I subunit gamma (249 aa).

Arg-120 contributes to the coenzyme M binding site.

This sequence belongs to the methyl-coenzyme M reductase gamma subunit family. In terms of assembly, MCR is a hexamer of two alpha, two beta, and two gamma chains, forming a dimer of heterotrimers. It depends on coenzyme F430 as a cofactor.

Its subcellular location is the cytoplasm. It carries out the reaction coenzyme B + methyl-coenzyme M = methane + coenzyme M-coenzyme B heterodisulfide. It functions in the pathway one-carbon metabolism; methyl-coenzyme M reduction; methane from methyl-coenzyme M: step 1/1. Its function is as follows. Component of the methyl-coenzyme M reductase (MCR) I that catalyzes the reductive cleavage of methyl-coenzyme M (CoM-S-CH3 or 2-(methylthio)ethanesulfonate) using coenzyme B (CoB or 7-mercaptoheptanoylthreonine phosphate) as reductant which results in the production of methane and the mixed heterodisulfide of CoB and CoM (CoM-S-S-CoB). This is the final step in methanogenesis. This chain is Methyl-coenzyme M reductase I subunit gamma (mcrG), found in Methanothermobacter thermautotrophicus (strain ATCC 29096 / DSM 1053 / JCM 10044 / NBRC 100330 / Delta H) (Methanobacterium thermoautotrophicum).